The primary structure comprises 605 residues: Inactive LRR receptor-like serine/threonine-protein kinase BIR2 (605 aa).

Residues Met-1 to Ala-28 form the signal peptide. Residues Ala-29–Gly-229 lie on the Extracellular side of the membrane. Asn-58 carries N-linked (GlcNAc...) asparagine glycosylation. LRR repeat units lie at residues Cys-101–Trp-125, Pro-127–Cys-150, Phe-152–Ala-173, and Leu-174–Ser-197. Residues Ile-230–Trp-250 traverse the membrane as a helical segment. The Cytoplasmic segment spans residues Trp-251–Val-605. Phosphoserine; by BAK1 is present on Ser-271. A Phosphothreonine; by BAK1 modification is found at Thr-283. Position 286 is a phosphoserine; by BAK1 (Ser-286). Thr-304 is subject to Phosphothreonine; by BAK1. The 272-residue stretch at Phe-307–Ile-578 folds into the Protein kinase domain. Position 313 to 321 (Ile-313 to Thr-321) interacts with ATP. Ser-330 carries the post-translational modification Phosphoserine; by BAK1. Residue Lys-335 coordinates ATP. Phosphoserine; by BAK1 is present on Ser-389. The residue at position 402 (Thr-402) is a Phosphothreonine. Residues Ser-448 and Ser-462 each carry the phosphoserine; by BAK1 modification. The residue at position 466 (Thr-466) is a Phosphothreonine; by BAK1. Position 479 is a phosphotyrosine (Tyr-479). Thr-482 bears the Phosphothreonine mark. A Phosphoserine modification is found at Ser-486. At Thr-533 the chain carries Phosphothreonine; by BAK1.

It belongs to the protein kinase superfamily. Ser/Thr protein kinase family. In terms of assembly, interacts constitutively with BAK1, when phosphorylated, thereby preventing interaction with the ligand-binding LRR-RLK FLS2. Upon infection, pathogen-associated molecular patterns (PAMP) perception leads to BIR2 release from the BAK1 complex and enables the recruitment of BAK1 into the FLS2 complex. Phosphorylated by BAK1, this interacts promotes interaction with BAK1.

The protein localises to the cell membrane. Its function is as follows. Pseudokinases lacking protein kinase activity and unable to bind ATP-analogs. Negative regulator of pathogen-associated molecular patterns- (PAMP-) triggered immunity by limiting BAK1-receptor complex formation in the absence of ligands. This is Inactive LRR receptor-like serine/threonine-protein kinase BIR2 from Arabidopsis thaliana (Mouse-ear cress).